Reading from the N-terminus, the 2148-residue chain is Polyketide synthase 1 (2148 aa).

The N-terminal acylcarrier protein transacylase domain (SAT) stretch occupies residues 19–261 (FIFGDQSSCN…TPLAVHAPYH (243 aa)). In terms of domain architecture, Ketosynthase family 3 (KS3) spans 394–829 (ESKIAIIGMS…GGNTALLVED (436 aa)). Active-site for beta-ketoacyl synthase activity residues include C566, H701, and H745. Residues 929–1233 (AFVFSGQGSQ…PSLMRNKDGW (305 aa)) form a malonyl-CoA:ACP transacylase (MAT) domain region. The For acyl/malonyl transferase activity role is filled by S1018. A product template (PT) domain region spans residues 1310–1624 (TASVHRIVHE…RKVLNTAMPP (315 aa)). Residues 1314 to 1447 (HRIVHESVEK…SSLHFEQPKV (134 aa)) form an N-terminal hotdog fold region. A PKS/mFAS DH domain is found at 1314-1619 (HRIVHESVEK…FQGIPRKVLN (306 aa)). H1346 serves as the catalytic Proton acceptor; for dehydratase activity. The interval 1474–1619 (LNSRMSSGVI…FQGIPRKVLN (146 aa)) is C-terminal hotdog fold. D1533 (proton donor; for dehydratase activity) is an active-site residue. The interval 1619-1655 (NTAMPPPKSQNEAPVRSGPAKPAVKPPRSASSEHSGH) is disordered. The Carrier 1 domain maps to 1678–1752 (RNPMLPVFKI…DLAAHLGMDT (75 aa)). S1712 carries the post-translational modification O-(pantetheine 4'-phosphoryl)serine. Low complexity predominate over residues 1755–1790 (ADQSSGQSSSSGGLSPRSDSIGEMTSSATTPPSMSP). A disordered region spans residues 1755-1796 (ADQSSGQSSSSGGLSPRSDSIGEMTSSATTPPSMSPRGSVSG). Positions 1793-1870 (SVSGSQCKDV…SFKHMFQQGH (78 aa)) constitute a Carrier 2 domain. S1830 bears the O-(pantetheine 4'-phosphoryl)serine mark. Residues 1882–2146 (LKQYRATSTL…ERVAAFIRSI (265 aa)) form a thioesterase (TE) domain region. S1973 (for thioesterase activity) is an active-site residue.

Polyketide synthase; part of the Pks1 gene cluster that mediates the biosynthesis of an anthraquinone derivative pigment that contributes to conidial pigmentation that provides protection from UV radiation, heat and cold stress. The polyketide synthase Pks1 produces 1-acetyl-2,4,6,8-tetrahydroxy-9,10-anthraquinone though condensation of acetyl-CoA with malonyl-CoA. The dehydratase EthD and the laccase Mlac1 further convert the anthraquinone derivative into the final conidial pigment. The chain is Polyketide synthase 1 from Metarhizium brunneum (strain ARSEF 3297).